Here is a 246-residue protein sequence, read N- to C-terminus: Acetoacetate decarboxylase (246 aa).

Residue K116 is the Schiff-base intermediate with acetoacetate of the active site.

Belongs to the ADC family.

It catalyses the reaction acetoacetate + H(+) = acetone + CO2. In terms of biological role, catalyzes the conversion of acetoacetate to acetone and carbon dioxide. The protein is Acetoacetate decarboxylase of Burkholderia mallei (strain NCTC 10247).